The following is an 88-amino-acid chain: Otospiralin (88 aa).

The first 21 residues, 1–21 (MQACMVPGLALCLLLGSLTEA), serve as a signal peptide directing secretion.

Belongs to the otospiralin family. As to expression, ear specific.

The protein localises to the secreted. May be essential for the survival of the neurosensory epithelium of the inner ear. This Cavia porcellus (Guinea pig) protein is Otospiralin (OTOS).